A 755-amino-acid chain; its full sequence is ABC transporter G family member 2 (755 aa).

Positions 98–358 (LSFTDLTYSV…FSEFKHPIPE (261 aa)) constitute an ABC transporter domain. ATP is bound at residue 151–158 (GASGSGKS). The region spanning 449 to 659 (IEMIVIGKRA…PYEGVLQNEF (211 aa)) is the ABC transmembrane type-2 domain. A run of 6 helical transmembrane segments spans residues 468-488 (LLGM…TMFT), 503-523 (FFAF…PVFL), 552-572 (IPAL…AVGL), 579-599 (FFFF…FVTF), 609-629 (LGFT…GFFI), and 728-748 (LWIT…TLLI).

The protein belongs to the ABC transporter superfamily. ABCG family. Eye pigment precursor importer (TC 3.A.1.204) subfamily.

It is found in the membrane. In Arabidopsis thaliana (Mouse-ear cress), this protein is ABC transporter G family member 2 (ABCG2).